Here is a 252-residue protein sequence, read N- to C-terminus: MTKLEVCCYSVDCAITAAQSGADRIELCAGQREGGLTPSYGALRGAREKIAIPVHPIVRPRGGDFCYNATEFAAIKYDIEQVREMGFPGVVVGALNEEGHIDLPKMREIMAVAQGMAVTFHRAFDMCLNPYIALEQLTDLGVSRILSSGQQQTAENGLRLLRELTQASRGPIIMAGSGVRLTNVHKFQQAGIRELHSSAGQWTSSPMRYRKIGVSMCSDTELDEFSQYCVDGDVVEAMKRAVSPDREMQYVS.

It belongs to the CutC family.

Its subcellular location is the cytoplasm. The chain is PF03932 family protein CutC from Pectobacterium atrosepticum (strain SCRI 1043 / ATCC BAA-672) (Erwinia carotovora subsp. atroseptica).